A 289-amino-acid polypeptide reads, in one-letter code: Oxaloacetate decarboxylase (289 aa).

S50 is a binding site for substrate. D88 contacts Mg(2+). Residues R159 and H235 each contribute to the substrate site.

Belongs to the isocitrate lyase/PEP mutase superfamily. Oxaloacetate decarboxylase family. In terms of assembly, homotetramer; dimer of dimers. The cofactor is Mg(2+).

It carries out the reaction oxaloacetate + H(+) = pyruvate + CO2. In terms of biological role, catalyzes the decarboxylation of oxaloacetate into pyruvate. Seems to play a role in maintaining cellular concentrations of bicarbonate and pyruvate. The chain is Oxaloacetate decarboxylase from Pseudomonas putida (strain GB-1).